The chain runs to 175 residues: 19.0 kDa class II heat shock protein (175 aa).

Positions 42-165 (DRRAMANTPM…KPRVVEVKVA (124 aa)) constitute a sHSP domain. The segment at 145 to 175 (TVDKKPPPEPKKPRVVEVKVAGAGEPKGKGK) is disordered. Basic and acidic residues predominate over residues 146–161 (VDKKPPPEPKKPRVVE).

Belongs to the small heat shock protein (HSP20) family. In terms of assembly, may form oligomeric structures.

It localises to the cytoplasm. This chain is 19.0 kDa class II heat shock protein (HSP19.0), found in Oryza sativa subsp. japonica (Rice).